A 356-amino-acid polypeptide reads, in one-letter code: GTPase Obg (356 aa).

The Obg domain occupies 1-159; the sequence is MKFLDQAKVY…RWIWLRLKLI (159 aa). The OBG-type G domain maps to 160-328; sequence ADAGLVGLPN…ALYAIAQHLG (169 aa). Residues 166 to 173, 191 to 195, 213 to 216, 280 to 283, and 309 to 311 contribute to the GTP site; these read GLPNAGKS, FTTLH, DIPG, NKID, and SGV. Mg(2+)-binding residues include S173 and T193. Positions 333–356 are disordered; that stretch reads DIPLPKPSNADEEDPDTDQPWSPV.

This sequence belongs to the TRAFAC class OBG-HflX-like GTPase superfamily. OBG GTPase family. As to quaternary structure, monomer. It depends on Mg(2+) as a cofactor.

It is found in the cytoplasm. Functionally, an essential GTPase which binds GTP, GDP and possibly (p)ppGpp with moderate affinity, with high nucleotide exchange rates and a fairly low GTP hydrolysis rate. Plays a role in control of the cell cycle, stress response, ribosome biogenesis and in those bacteria that undergo differentiation, in morphogenesis control. The polypeptide is GTPase Obg (Hyphomonas neptunium (strain ATCC 15444)).